The chain runs to 401 residues: S-adenosylmethionine synthase (401 aa).

ATP is bound at residue His-16. Asp-18 is a binding site for Mg(2+). Glu-44 is a K(+) binding site. 2 residues coordinate L-methionine: Glu-57 and Gln-100. The flexible loop stretch occupies residues 100-110 (QSPDIAQGVNE). ATP-binding positions include 174–176 (DAK), 241–242 (RF), Asp-250, 256–257 (RK), Ala-273, and Lys-277. Asp-250 is a binding site for L-methionine. Residue Lys-281 participates in L-methionine binding.

Belongs to the AdoMet synthase family. As to quaternary structure, homotetramer; dimer of dimers. Mg(2+) serves as cofactor. The cofactor is K(+).

It is found in the cytoplasm. It carries out the reaction L-methionine + ATP + H2O = S-adenosyl-L-methionine + phosphate + diphosphate. Its pathway is amino-acid biosynthesis; S-adenosyl-L-methionine biosynthesis; S-adenosyl-L-methionine from L-methionine: step 1/1. Functionally, catalyzes the formation of S-adenosylmethionine (AdoMet) from methionine and ATP. The overall synthetic reaction is composed of two sequential steps, AdoMet formation and the subsequent tripolyphosphate hydrolysis which occurs prior to release of AdoMet from the enzyme. The protein is S-adenosylmethionine synthase of Streptococcus equi subsp. zooepidemicus (strain MGCS10565).